Reading from the N-terminus, the 132-residue chain is Large ribosomal subunit protein uL14 (132 aa).

Belongs to the universal ribosomal protein uL14 family. As to quaternary structure, part of the 50S ribosomal subunit. Forms a cluster with proteins L3 and L24e, part of which may contact the 16S rRNA in 2 intersubunit bridges.

Its function is as follows. Binds to 23S rRNA. Forms part of two intersubunit bridges in the 70S ribosome. The chain is Large ribosomal subunit protein uL14 from Halobacterium salinarum (strain ATCC 29341 / DSM 671 / R1).